The chain runs to 892 residues: Translation initiation factor IF-2 (892 aa).

The span at 138-185 (QRNLAEQQRLAEVDRQRVEEQERKRREEEQAELERQKTESRVVEEILV) shows a compositional bias: basic and acidic residues. Disordered stretches follow at residues 138-250 (QRNL…EDDS) and 262-298 (AAER…SGAH). Residues 207 to 219 (LPRTVRPTPAARP) show a composition bias toward low complexity. The 170-residue stretch at 391–560 (PRPPVVTIMG…SIQAEVLELK (170 aa)) folds into the tr-type G domain. GTP-binding positions include 400–407 (GHVDHGKT), 446–450 (DTPGH), and 500–503 (SKID).

It belongs to the TRAFAC class translation factor GTPase superfamily. Classic translation factor GTPase family. IF-2 subfamily.

The protein localises to the cytoplasm. In terms of biological role, one of the essential components for the initiation of protein synthesis. Protects formylmethionyl-tRNA from spontaneous hydrolysis and promotes its binding to the 30S ribosomal subunits. Also involved in the hydrolysis of GTP during the formation of the 70S ribosomal complex. The polypeptide is Translation initiation factor IF-2 (Xylella fastidiosa (strain Temecula1 / ATCC 700964)).